The chain runs to 222 residues: UPF0688 protein C1orf174 homolog (222 aa).

Disordered regions lie at residues 23–57 (STSL…RTSK) and 98–158 (EDGA…EPVP). A compositionally biased stretch (polar residues) spans 33-48 (ASSTSAKTTCLASSSH). Over residues 121–131 (VSEEPSVKAEE) the composition is skewed to basic and acidic residues. Serine 172 is subject to Phosphoserine.

The protein belongs to the UPF0688 family.

Its subcellular location is the nucleus. In Rattus norvegicus (Rat), this protein is UPF0688 protein C1orf174 homolog.